The sequence spans 241 residues: Methylthioribulose-1-phosphate dehydratase (241 aa).

C102 is a binding site for substrate. Residues H120, H122, and H199 each contribute to the Zn(2+) site.

Belongs to the aldolase class II family. MtnB subfamily. It depends on Zn(2+) as a cofactor.

The protein localises to the cytoplasm. It catalyses the reaction 5-(methylsulfanyl)-D-ribulose 1-phosphate = 5-methylsulfanyl-2,3-dioxopentyl phosphate + H2O. Its pathway is amino-acid biosynthesis; L-methionine biosynthesis via salvage pathway; L-methionine from S-methyl-5-thio-alpha-D-ribose 1-phosphate: step 2/6. Functionally, catalyzes the dehydration of methylthioribulose-1-phosphate (MTRu-1-P) into 2,3-diketo-5-methylthiopentyl-1-phosphate (DK-MTP-1-P). The polypeptide is Methylthioribulose-1-phosphate dehydratase (Coprinopsis cinerea (strain Okayama-7 / 130 / ATCC MYA-4618 / FGSC 9003) (Inky cap fungus)).